Reading from the N-terminus, the 209-residue chain is ATP phosphoribosyltransferase (209 aa).

It belongs to the ATP phosphoribosyltransferase family. Short subfamily. In terms of assembly, heteromultimer composed of HisG and HisZ subunits.

The protein resides in the cytoplasm. It catalyses the reaction 1-(5-phospho-beta-D-ribosyl)-ATP + diphosphate = 5-phospho-alpha-D-ribose 1-diphosphate + ATP. It participates in amino-acid biosynthesis; L-histidine biosynthesis; L-histidine from 5-phospho-alpha-D-ribose 1-diphosphate: step 1/9. In terms of biological role, catalyzes the condensation of ATP and 5-phosphoribose 1-diphosphate to form N'-(5'-phosphoribosyl)-ATP (PR-ATP). Has a crucial role in the pathway because the rate of histidine biosynthesis seems to be controlled primarily by regulation of HisG enzymatic activity. This Caldicellulosiruptor bescii (strain ATCC BAA-1888 / DSM 6725 / KCTC 15123 / Z-1320) (Anaerocellum thermophilum) protein is ATP phosphoribosyltransferase.